A 465-amino-acid polypeptide reads, in one-letter code: Serine carboxypeptidase-like 19 (465 aa).

Residues 1–23 (MRNLSFIVLFLLTLFFIHHLVDA) form the signal peptide. A substrate-binding site is contributed by 77 to 79 (TGG). Intrachain disulfides connect C82/C353, C246/C260, and C284/C320. The N-linked (GlcNAc...) asparagine glycan is linked to N103. 177 to 179 (DSY) contributes to the substrate binding site. S178 is a catalytic residue. A propeptide spans 292 to 317 (DTPNIRTDRRRVMKEFSVNDSSSLPP) (linker peptide). N-linked (GlcNAc...) asparagine glycans are attached at residues N310 and N373. D389 is an active-site residue. A glycan (N-linked (GlcNAc...) asparagine) is linked at N405. 439–443 (KGGGH) serves as a coordination point for substrate. The active site involves H443.

The protein belongs to the peptidase S10 family. In terms of assembly, heterodimer. In terms of processing, N-glycosylated. In terms of tissue distribution, expressed in roots and flowers, and at lower levels in young leaves and seedlings. Expressed in mature seeds and detected in expanding siliques.

Its subcellular location is the secreted. It catalyses the reaction 1-O-(trans-sinapoyl)-beta-D-glucose + choline = O-sinapoylcholine + D-glucose. With respect to regulation, slightly inhibited by phenylmethylsulfonyl fluoride (PMSF). Involved in plants secondary metabolism. Functions as acyltransferase to form the sinapate ester sinapoylcholine also known as sinapine. Able to convert in vitro benzoylglucose into benzoylcholine. The protein is Serine carboxypeptidase-like 19 of Arabidopsis thaliana (Mouse-ear cress).